We begin with the raw amino-acid sequence, 437 residues long: MKITMIGAGYVGLVSGVCFADFGHDVVCVDKDEGKISALKKGQIPIFEPGLDHLVASNVASGRLNFTDDLKTAVAASDVVFIAVGTPSRRGDGHADLSYVYAAAREIAANLQGFTVVVTKSTVPVGTGDEVERIIRETNPAADVTVVSNPEFLREGAAIEDFKRPDRIVIGVDGSDGRAREVMTEVYRPLYLNQSPLVFTTRRTSELIKYAGNAFLAMKITFINEIADLCEKVGANVQDVARGIGLDGRIGSKFLHAGPGYGGSCFPKDTLALVKTAQDHDTPVRLVETTVAVNDNRKRAMGRKVIAAAGGDIRGSKIAVLGLTFKPNTDDMRDSPAIAVVQALQDAGARVTGYDPEGMENARKLIEGLDCARDPYEAAAEADALVIITEWNEFRALDFDRLKSTMKTPLLVDLRNIYRKDEVAKHGFRYASIGRPD.

Residues Val11, Asp30, Lys35, Thr86, Thr122, and Glu155 each contribute to the NAD(+) site. Residues 151-155 (EFLRE), Lys209, Asn213, 254-258 (FLHAG), and Gly262 contribute to the substrate site. Cys265 functions as the Nucleophile in the catalytic mechanism. Lys268 lines the NAD(+) pocket. Lys326 is a binding site for substrate. Position 333 (Arg333) interacts with NAD(+).

The protein belongs to the UDP-glucose/GDP-mannose dehydrogenase family.

It carries out the reaction UDP-alpha-D-glucose + 2 NAD(+) + H2O = UDP-alpha-D-glucuronate + 2 NADH + 3 H(+). It functions in the pathway nucleotide-sugar biosynthesis; UDP-alpha-D-glucuronate biosynthesis; UDP-alpha-D-glucuronate from UDP-alpha-D-glucose: step 1/1. The protein operates within capsule biogenesis; capsule polysaccharide biosynthesis. The chain is UDP-glucose 6-dehydrogenase from Rhizobium meliloti (strain 1021) (Ensifer meliloti).